Reading from the N-terminus, the 313-residue chain is Nucleotide-binding protein Swit_0399 (313 aa).

Position 20 to 27 (20 to 27) interacts with ATP; it reads GMSGSGKK. 73–76 serves as a coordination point for GTP; that stretch reads DSRT. A disordered region spans residues 289-313; sequence PTVRHRDLTRQKSNAEESTVPGVGS. Positions 292-303 are enriched in basic and acidic residues; sequence RHRDLTRQKSNA.

The protein belongs to the RapZ-like family.

Displays ATPase and GTPase activities. This Rhizorhabdus wittichii (strain DSM 6014 / CCUG 31198 / JCM 15750 / NBRC 105917 / EY 4224 / RW1) (Sphingomonas wittichii) protein is Nucleotide-binding protein Swit_0399.